Consider the following 303-residue polypeptide: Terpene synthase (303 aa).

Positions 69 and 73 each coordinate Mg(2+). The DDXXD motif signature appears at 69–73 (DDIQD).

It belongs to the FPP/GGPP synthase family. The cofactor is Mg(2+).

The enzyme catalyses (2E)-geranyl diphosphate + H2O = (2E)-geraniol + diphosphate. In terms of biological role, terpene synthase that is able to convert geraniol diphosphate to geraniol in tea leaves. In Matsumurasca onukii (Tea green leafhopper), this protein is Terpene synthase.